Reading from the N-terminus, the 89-residue chain is Phosphocarrier protein HPr (89 aa).

One can recognise an HPr domain in the interval 1-88; it reads MLEHELTVTN…ELFENRFNED (88 aa). Residue His15 is the Pros-phosphohistidine intermediate of the active site. Residue Ser46 is modified to Phosphoserine; by HPrK/P.

It belongs to the HPr family.

It localises to the cytoplasm. Its activity is regulated as follows. Phosphorylation on Ser-46 inhibits the phosphoryl transfer from enzyme I to HPr. Functionally, general (non sugar-specific) component of the phosphoenolpyruvate-dependent sugar phosphotransferase system (sugar PTS). This major carbohydrate active-transport system catalyzes the phosphorylation of incoming sugar substrates concomitantly with their translocation across the cell membrane. The phosphoryl group from phosphoenolpyruvate (PEP) is transferred to the phosphoryl carrier protein HPr by enzyme I. Phospho-HPr then transfers it to the PTS EIIA domain. This Xylella fastidiosa (strain Temecula1 / ATCC 700964) protein is Phosphocarrier protein HPr (ptsH).